The following is a 240-amino-acid chain: Protein unc-119 homolog A (240 aa).

Residues 1 to 12 are compositionally biased toward gly residues; the sequence is MKVKKGGGGTGS. The interval 1–62 is disordered; it reads MKVKKGGGGT…PLQGKQPIGP (62 aa). S37, S39, and S41 each carry phosphoserine; by CK2. Tetradecanoate is bound at residue Y131.

Belongs to the PDE6D/unc-119 family. May interact with GTP-bound ARL1. Interacts with ARL2 and ARL3 (GTP-bound forms); this promotes the release of myristoylated cargo proteins. Found in a complex with ARL3, RP2 and UNC119; RP2 induces hydrolysis of GTP ARL3 in the complex, leading to the release of UNC119. Interacts with NPHP3 (when myristoylated). Interacts with CYS1 (when myristoylated). Interacts with MACIR; interaction only takes place when UNC119 is not liganded with myristoylated proteins. Interacts with CABP4; in the absence of calcium. Interacts with DNM1; leading to a decrease of DNM1 GTPase activity. Interacts with LCK; this interaction plays a crucial role in activation of LCK. Interacts with FYN. Interacts with RAB11A; in a cell cycle-dependent manner. Interacts with LYN (via SH2 and SH3 domains); leading to LYN activation. Found in a complex with ABL1, ABL2, CRK and UNC119; leading to the inhibition of CRK phosphorylation by ABL kinases. Interacts with CD44. Interacts with KLHL18 (via kelch repeats). Interacts with PPP3CA, PPP3CB and PPP3CC. Interacts with USP48; this interaction promotes UNC119 stability. In terms of processing, phosphorylation suppresses its interaction with KLHL18 and down-regulates its KLHL18-mediated degradation. Phosphorylated more under light conditions than dark conditions. Dephosphorylated by calcineurin. As to expression, localized in photoreceptor synapses in the outer plexiform layer of the retina.

The protein localises to the cytoplasm. It is found in the cytoskeleton. Its subcellular location is the microtubule organizing center. The protein resides in the centrosome. It localises to the spindle. The protein localises to the spindle pole. Its function is as follows. Involved in synaptic functions in photoreceptor cells, the signal transduction in immune cells as a Src family kinase activator, endosome recycling, the uptake of bacteria and endocytosis, protein trafficking in sensory neurons and as lipid-binding chaperone with specificity for a diverse subset of myristoylated proteins. Specifically binds the myristoyl moiety of a subset of N-terminally myristoylated proteins and is required for their localization. Binds myristoylated GNAT1 and is required for G-protein localization and trafficking in sensory neurons. Probably plays a role in trafficking proteins in photoreceptor cells. Plays important roles in mediating Src family kinase signals for the completion of cytokinesis via RAB11A. This Mus musculus (Mouse) protein is Protein unc-119 homolog A (Unc119).